The sequence spans 410 residues: Arginine deiminase (410 aa).

Cysteine 400 acts as the Amidino-cysteine intermediate in catalysis.

It belongs to the arginine deiminase family.

The protein localises to the cytoplasm. The catalysed reaction is L-arginine + H2O = L-citrulline + NH4(+). Its pathway is amino-acid degradation; L-arginine degradation via ADI pathway; carbamoyl phosphate from L-arginine: step 1/2. The protein is Arginine deiminase of Bacillus thuringiensis subsp. konkukian (strain 97-27).